The sequence spans 139 residues: Protein VP5 (139 aa).

A disordered region spans residues 94-139; the sequence is RDALPPTDLGTTMPTTNRSRSARPTPRPMGSTSTQQHPQRSRSTCR. Over residues 102 to 112 the composition is skewed to polar residues; the sequence is LGTTMPTTNRS.

In Channa lucius (Forest snakehead), this protein is Protein VP5 (VP5).